A 540-amino-acid polypeptide reads, in one-letter code: NEDD8-activating enzyme E1 regulatory subunit AXR1 (540 aa).

Belongs to the ubiquitin-activating E1 family. ULA1 subfamily. As to quaternary structure, heterodimer of ECR1 and AXR1. The complex binds to RUB1/NEDD8 and RCE1. In terms of tissue distribution, expressed in shoot, root and floral meristems, in vascular tissues of cotyledons and mature leaves, and in the stele of the root. Expressed at higher levels on the lower side of an emerging root during germination and at higher levels on the underside of the apical hook.

It is found in the nucleus. Its pathway is protein modification; protein neddylation. Regulatory subunit of the dimeric ECR1-AXR1 E1 enzyme. E1 activates RUB1/NEDD8 by first adenylating its C-terminal glycine residue with ATP, thereafter linking this residue to the side chain of the catalytic cysteine, yielding a RUB1-ECR1 thioester and free AMP. E1 finally transfers RUB1 to the catalytic cysteine of RCE1. Plays an important role in auxin response. Regulates the chromosomal localization of meiotic recombination by crossovers (COs) and subsequent synapsis, probably through the activation of a CRL4 complex. Required for E3-mediated protein degradation in response to auxin, jasmonic acid and cold stress. Required for the COP1-COP10-CSN-mediated repression of photomorphogenesis in the dark. May function redundantly with AXL1 in the RUB conjugating pathway. Seems not to be functionally equivalent to AXL1 in vivo. In Arabidopsis thaliana (Mouse-ear cress), this protein is NEDD8-activating enzyme E1 regulatory subunit AXR1.